A 75-amino-acid chain; its full sequence is MATEKFETALKKLEEIVRRLEGGSLSLDESLKAFEEGVRHASFCSKKLDEAERRVEVLLKRKDGSFSREPFQPDE.

Belongs to the XseB family. Heterooligomer composed of large and small subunits.

The protein resides in the cytoplasm. It carries out the reaction Exonucleolytic cleavage in either 5'- to 3'- or 3'- to 5'-direction to yield nucleoside 5'-phosphates.. Bidirectionally degrades single-stranded DNA into large acid-insoluble oligonucleotides, which are then degraded further into small acid-soluble oligonucleotides. This is Exodeoxyribonuclease 7 small subunit from Pelobacter propionicus (strain DSM 2379 / NBRC 103807 / OttBd1).